The sequence spans 354 residues: Transcription factor BHLH3 (354 aa).

Positions 124 to 143 (VAEEETSGDKALLHGGGGSS) are disordered. Positions 178-191 (GTPSKNLMAERRRR) are basic motif. In terms of domain architecture, bHLH spans 178–227 (GTPSKNLMAERRRRKRLNDRLSMLRSIVPKISKMDRTSILGDTIDYVKEL). Residues 192–227 (KRLNDRLSMLRSIVPKISKMDRTSILGDTIDYVKEL) form a helix-loop-helix motif region.

It belongs to the bHLH protein family. As to quaternary structure, interacts with LAX1. In terms of processing, phosphorylated by MAPK3 and MAPK6.

It localises to the nucleus. Its subcellular location is the cytoplasm. In terms of biological role, transcription factor involved in defense responses that functions downstream of RAC1 and upstream of PAL1 and WRKY19 genes. This chain is Transcription factor BHLH3, found in Oryza sativa subsp. japonica (Rice).